Consider the following 475-residue polypeptide: F-box protein At3g59150 (475 aa).

Residues 12–58 (GDVISNLPNDLLCRILSYLSTKEAALTSILSKRWSNLLLSIPILDFD) enclose the F-box domain.

In Arabidopsis thaliana (Mouse-ear cress), this protein is F-box protein At3g59150.